The primary structure comprises 194 residues: Yellow fluorescent protein (194 aa).

Lumazine-binding repeat units follow at residues 1–98 (MFKG…SGGH) and 99–194 (ILSA…NQCW). Residue 179–183 (KVNVE) participates in FMN binding.

In terms of assembly, homodimer. FMN serves as cofactor.

In terms of biological role, antenna protein that modulates the color of the bioluminescence emission of the luciferase. In the presence of YFP and only at temperatures below 20 degrees Celsius, luciferase exhibits a bimodal emission spectrum with a new peak at 545 nM (yellow), in addition to the one at 485 nM. The chain is Yellow fluorescent protein (luxY) from Aliivibrio fischeri (Vibrio fischeri).